The chain runs to 495 residues: ATP synthase subunit beta, chloroplastic (495 aa).

172 to 179 (GGAGVGKT) serves as a coordination point for ATP.

The protein belongs to the ATPase alpha/beta chains family. F-type ATPases have 2 components, CF(1) - the catalytic core - and CF(0) - the membrane proton channel. CF(1) has five subunits: alpha(3), beta(3), gamma(1), delta(1), epsilon(1). CF(0) has four main subunits: a(1), b(1), b'(1) and c(9-12).

It localises to the plastid. It is found in the chloroplast thylakoid membrane. It carries out the reaction ATP + H2O + 4 H(+)(in) = ADP + phosphate + 5 H(+)(out). Produces ATP from ADP in the presence of a proton gradient across the membrane. The catalytic sites are hosted primarily by the beta subunits. The chain is ATP synthase subunit beta, chloroplastic from Bowiea volubilis (Climbing onion).